A 1029-amino-acid chain; its full sequence is Protein translocase subunit SecA (1029 aa).

ATP is bound by residues glutamine 143, 161-165, and aspartate 661; that span reads GEGKT. Residues 953-1029 are disordered; sequence EQEQKKSQVQ…GKKYKNCCGK (77 aa). 2 stretches are compositionally biased toward basic and acidic residues: residues 966–975 and 984–996; these read LVARHEKAET and PEGRQEKKAENGK. Positions 1015, 1017, 1026, and 1027 each coordinate Zn(2+).

The protein belongs to the SecA family. Monomer and homodimer. Part of the essential Sec protein translocation apparatus which comprises SecA, SecYEG and auxiliary proteins SecDF. Other proteins may also be involved. Zn(2+) is required as a cofactor.

The protein resides in the cell inner membrane. It is found in the cytoplasm. The enzyme catalyses ATP + H2O + cellular proteinSide 1 = ADP + phosphate + cellular proteinSide 2.. Part of the Sec protein translocase complex. Interacts with the SecYEG preprotein conducting channel. Has a central role in coupling the hydrolysis of ATP to the transfer of proteins into and across the cell membrane, serving as an ATP-driven molecular motor driving the stepwise translocation of polypeptide chains across the membrane. This is Protein translocase subunit SecA from Chlorobium phaeobacteroides (strain BS1).